We begin with the raw amino-acid sequence, 765 residues long: Protein PAT1 homolog 1 (765 aa).

Disordered stretches follow at residues 1-98, 119-147, and 210-244; these read MFRF…DERG, GVGSTSSDRSHLPPMLSAHPPHPSALAGP, and LPNRPPSLSRDEGRDLSERVPPPRSSSPVIGSPPV. Residues 7 to 30 are compositionally biased toward acidic residues; it reads LDDDCTLEEEEGLVEEEDEIDQFN. Positions 45-59 are enriched in basic and acidic residues; the sequence is EEHTRLAELDERVRD. A compositionally biased stretch (basic and acidic residues) spans 218 to 227; sequence SRDEGRDLSE. A phosphoserine mark is found at serine 235 and serine 236. Positions 235–244 are enriched in low complexity; sequence SSPVIGSPPV.

It belongs to the PAT1 family. As to quaternary structure, interacts with ribonucleoprotein complex components.

It localises to the cytoplasm. It is found in the P-body. The protein localises to the nucleus. The protein resides in the PML body. Its subcellular location is the nucleus speckle. RNA-binding protein involved in deadenylation-dependent decapping of mRNAs, leading to the degradation of mRNAs. Acts as a scaffold protein that connects deadenylation and decapping machinery. Required for cytoplasmic mRNA processing body (P-body) assembly. The polypeptide is Protein PAT1 homolog 1 (patl1) (Danio rerio (Zebrafish)).